Here is a 546-residue protein sequence, read N- to C-terminus: Chaperonin GroEL (546 aa).

ATP-binding positions include 30-33, Lys-51, 87-91, Gly-415, and Asp-495; these read TLGP and DGTTT.

The protein belongs to the chaperonin (HSP60) family. Forms a cylinder of 14 subunits composed of two heptameric rings stacked back-to-back. Interacts with the co-chaperonin GroES.

Its subcellular location is the cytoplasm. It carries out the reaction ATP + H2O + a folded polypeptide = ADP + phosphate + an unfolded polypeptide.. In terms of biological role, together with its co-chaperonin GroES, plays an essential role in assisting protein folding. The GroEL-GroES system forms a nano-cage that allows encapsulation of the non-native substrate proteins and provides a physical environment optimized to promote and accelerate protein folding. This chain is Chaperonin GroEL, found in Brucella melitensis biotype 1 (strain ATCC 23456 / CCUG 17765 / NCTC 10094 / 16M).